We begin with the raw amino-acid sequence, 539 residues long: Probable transcription factor GLK2 (539 aa).

Residues 86–218 (FASSPDDEPP…NSHGKRKVKV (133 aa)) are disordered. Low complexity-rich tracts occupy residues 99 to 111 (SAPG…AAAG) and 121 to 130 (AAAAAAAAAA). Residues 144–161 (KKDDEERSSSLPEEKDAK) show a composition bias toward basic and acidic residues. In terms of domain architecture, HTH myb-type spans 212–271 (GKRKVKVDWTPELHRRFVQAVEQLGIDKAVPSRILELMGIECLTRHNIASHLQKYRSHRK). Positions 242 to 267 (PSRILELMGIECLTRHNIASHLQKYR) form a DNA-binding region, H-T-H motif.

As to expression, expressed in leaves.

The protein localises to the nucleus. Probable transcriptional activator that promotes chloroplast development. Acts as an activator of nuclear photosynthetic genes involved in chlorophyll biosynthesis, light harvesting, and electron transport. This Oryza sativa subsp. japonica (Rice) protein is Probable transcription factor GLK2 (GLK2).